The sequence spans 345 residues: Phosphoribosylformylglycinamidine cyclo-ligase (345 aa).

It belongs to the AIR synthase family.

It localises to the cytoplasm. The catalysed reaction is 2-formamido-N(1)-(5-O-phospho-beta-D-ribosyl)acetamidine + ATP = 5-amino-1-(5-phospho-beta-D-ribosyl)imidazole + ADP + phosphate + H(+). It functions in the pathway purine metabolism; IMP biosynthesis via de novo pathway; 5-amino-1-(5-phospho-D-ribosyl)imidazole from N(2)-formyl-N(1)-(5-phospho-D-ribosyl)glycinamide: step 2/2. This chain is Phosphoribosylformylglycinamidine cyclo-ligase, found in Escherichia fergusonii (strain ATCC 35469 / DSM 13698 / CCUG 18766 / IAM 14443 / JCM 21226 / LMG 7866 / NBRC 102419 / NCTC 12128 / CDC 0568-73).